The sequence spans 666 residues: DNA mismatch repair protein MutL (666 aa).

The protein belongs to the DNA mismatch repair MutL/HexB family.

In terms of biological role, this protein is involved in the repair of mismatches in DNA. It is required for dam-dependent methyl-directed DNA mismatch repair. May act as a 'molecular matchmaker', a protein that promotes the formation of a stable complex between two or more DNA-binding proteins in an ATP-dependent manner without itself being part of a final effector complex. The protein is DNA mismatch repair protein MutL of Clostridium botulinum (strain ATCC 19397 / Type A).